Consider the following 157-residue polypeptide: SsrA-binding protein (157 aa).

A disordered region spans residues 135–157; it reads KRDTIKDREGKREVERAMKTNHR.

The protein belongs to the SmpB family.

The protein resides in the cytoplasm. In terms of biological role, required for rescue of stalled ribosomes mediated by trans-translation. Binds to transfer-messenger RNA (tmRNA), required for stable association of tmRNA with ribosomes. tmRNA and SmpB together mimic tRNA shape, replacing the anticodon stem-loop with SmpB. tmRNA is encoded by the ssrA gene; the 2 termini fold to resemble tRNA(Ala) and it encodes a 'tag peptide', a short internal open reading frame. During trans-translation Ala-aminoacylated tmRNA acts like a tRNA, entering the A-site of stalled ribosomes, displacing the stalled mRNA. The ribosome then switches to translate the ORF on the tmRNA; the nascent peptide is terminated with the 'tag peptide' encoded by the tmRNA and targeted for degradation. The ribosome is freed to recommence translation, which seems to be the essential function of trans-translation. The polypeptide is SsrA-binding protein (Albidiferax ferrireducens (strain ATCC BAA-621 / DSM 15236 / T118) (Rhodoferax ferrireducens)).